Consider the following 76-residue polypeptide: Omega/kappa-hexatoxin-Ar1g (76 aa).

The N-terminal stretch at 1–22 (MNTATGFIVLLVLATVLGGIEA) is a signal peptide. A propeptide spanning residues 23 to 35 (GESHMRKDAMGRV) is cleaved from the precursor. 3 cysteine pairs are disulfide-bonded: Cys40/Cys55, Cys47/Cys60, and Cys54/Cys74.

Belongs to the neurotoxin 08 (Shiva) family. 02 (omega/kappa toxin) subfamily. As to expression, expressed by the venom gland.

It localises to the secreted. Its function is as follows. Toxin that may inhibit ion channels. This is Omega/kappa-hexatoxin-Ar1g from Atrax robustus (Sydney funnel-web spider).